The following is a 210-amino-acid chain: Glutathione S-transferase P 1 (210 aa).

Residues Pro2–Gly81 enclose the GST N-terminal domain. Tyr4 is subject to Phosphotyrosine; by EGFR. Residues Tyr8, Arg14, Trp39, Lys45, and Gln52–Leu53 contribute to the glutathione site. The residue at position 62 (Thr62) is a Phosphothreonine. Gln65–Ser66 lines the glutathione pocket. Residues Asn83 to Ile204 enclose the GST C-terminal domain. Lys103 and Lys116 each carry N6-succinyllysine. N6-acetyllysine is present on Lys128.

Homodimer. Interacts with CDK5. Ubiquitously expressed.

The protein localises to the cytoplasm. It localises to the mitochondrion. Its subcellular location is the nucleus. It carries out the reaction RX + glutathione = an S-substituted glutathione + a halide anion + H(+). The catalysed reaction is prostaglandin J2 + glutathione = prostaglandin J2-S-(R)-glutathione. The enzyme catalyses prostaglandin J2 + glutathione = prostaglandin J2-S-(S)-glutathione. It catalyses the reaction prostaglandin A2 + glutathione = prostaglandin A2-S-(S)-glutathione. It carries out the reaction 11(S)-hydroxy-14(S),15(S)-epoxy-(5Z,8Z,12E)-eicosatrienoate + glutathione = (11S,15S)-dihydroxy-14(R)-S-glutathionyl-(5Z,8Z,12E)-eicosatrienoate. Its function is as follows. Conjugation of reduced glutathione to a wide number of exogenous and endogenous hydrophobic electrophiles. Involved in the formation of glutathione conjugates of both prostaglandin A2 (PGA2) and prostaglandin J2 (PGJ2). Participates in the formation of novel hepoxilin regioisomers. Negatively regulates CDK5 activity via p25/p35 translocation to prevent neurodegeneration. The protein is Glutathione S-transferase P 1 of Mus musculus (Mouse).